Reading from the N-terminus, the 127-residue chain is Large ribosomal subunit protein bL20 (127 aa).

It belongs to the bacterial ribosomal protein bL20 family.

In terms of biological role, binds directly to 23S ribosomal RNA and is necessary for the in vitro assembly process of the 50S ribosomal subunit. It is not involved in the protein synthesizing functions of that subunit. This Corynebacterium jeikeium (strain K411) protein is Large ribosomal subunit protein bL20.